Consider the following 156-residue polypeptide: Endoribonuclease YbeY (156 aa).

Residues His-122, His-126, and His-132 each contribute to the Zn(2+) site.

Belongs to the endoribonuclease YbeY family. Zn(2+) is required as a cofactor.

It localises to the cytoplasm. Functionally, single strand-specific metallo-endoribonuclease involved in late-stage 70S ribosome quality control and in maturation of the 3' terminus of the 16S rRNA. In Bacillus cereus (strain G9842), this protein is Endoribonuclease YbeY.